A 355-amino-acid chain; its full sequence is Alanine racemase (355 aa).

Lys-37 serves as the catalytic Proton acceptor; specific for D-alanine. Lys-37 carries the post-translational modification N6-(pyridoxal phosphate)lysine. Position 129 (Arg-129) interacts with substrate. Tyr-251 serves as the catalytic Proton acceptor; specific for L-alanine. Met-299 lines the substrate pocket.

Belongs to the alanine racemase family. The cofactor is pyridoxal 5'-phosphate.

It catalyses the reaction L-alanine = D-alanine. It functions in the pathway amino-acid biosynthesis; D-alanine biosynthesis; D-alanine from L-alanine: step 1/1. Catalyzes the interconversion of L-alanine and D-alanine. May also act on other amino acids. This Deinococcus geothermalis (strain DSM 11300 / CIP 105573 / AG-3a) protein is Alanine racemase (alr).